The primary structure comprises 182 residues: Transcription repressor OFP11 (182 aa).

Positions 62–94 are disordered; it reads PLHRRHSSENPAGVFSTNRREEEEEDETTTSVS. The region spanning 104-169 is the OVATE domain; the sequence is MKHIESPDPY…VSAFADTLLW (66 aa).

Expressed in roots, rosette and cauline leaves, shoots, stems, flower buds and siliques.

It is found in the nucleus. Transcriptional repressor that may regulate multiple aspects of plant growth and development through the regulation of BEL1-LIKE (BLH) and KNOX TALE (KNAT) homeodomain transcription factors. The chain is Transcription repressor OFP11 (OFP11) from Arabidopsis thaliana (Mouse-ear cress).